We begin with the raw amino-acid sequence, 965 residues long: Isoleucine--tRNA ligase (965 aa).

The short motif at proline 68–histidine 78 is the 'HIGH' region element. Residue glutamate 582 participates in L-isoleucyl-5'-AMP binding. The 'KMSKS' region motif lies at lysine 623–serine 627. Lysine 626 is an ATP binding site. Zn(2+) is bound by residues cysteine 936, cysteine 939, cysteine 956, and cysteine 959.

It belongs to the class-I aminoacyl-tRNA synthetase family. IleS type 1 subfamily. Monomer. Zn(2+) is required as a cofactor.

It localises to the cytoplasm. The catalysed reaction is tRNA(Ile) + L-isoleucine + ATP = L-isoleucyl-tRNA(Ile) + AMP + diphosphate. In terms of biological role, catalyzes the attachment of isoleucine to tRNA(Ile). As IleRS can inadvertently accommodate and process structurally similar amino acids such as valine, to avoid such errors it has two additional distinct tRNA(Ile)-dependent editing activities. One activity is designated as 'pretransfer' editing and involves the hydrolysis of activated Val-AMP. The other activity is designated 'posttransfer' editing and involves deacylation of mischarged Val-tRNA(Ile). This is Isoleucine--tRNA ligase from Prochlorococcus marinus subsp. pastoris (strain CCMP1986 / NIES-2087 / MED4).